Reading from the N-terminus, the 165-residue chain is Lipoprotein signal peptidase (165 aa).

A run of 3 helical transmembrane segments spans residues 9–29 (SFLW…YFVV), 65–85 (WQKY…CYFL), and 100–120 (ALII…GFVV). Active-site residues include D121 and D139. A helical membrane pass occupies residues 134–154 (VFNVADIAISLGAGLMILDAF).

This sequence belongs to the peptidase A8 family.

The protein localises to the cell inner membrane. It catalyses the reaction Release of signal peptides from bacterial membrane prolipoproteins. Hydrolyzes -Xaa-Yaa-Zaa-|-(S,diacylglyceryl)Cys-, in which Xaa is hydrophobic (preferably Leu), and Yaa (Ala or Ser) and Zaa (Gly or Ala) have small, neutral side chains.. It functions in the pathway protein modification; lipoprotein biosynthesis (signal peptide cleavage). Its function is as follows. This protein specifically catalyzes the removal of signal peptides from prolipoproteins. The polypeptide is Lipoprotein signal peptidase (Pasteurella multocida (strain Pm70)).